A 205-amino-acid chain; its full sequence is MKIKEAEFVISAVKGEQYPEDNLPEVALVGRSNVGKSSLINKLCNRRHLARTSSTPGKTQTLNFYRINQAAYIVDLPGYGYASVSKTQRASWGPMMEHYLKKRLQLRGVIQLVDIRHPPTKDDIAMREWLNHFKIGAAVIATKADKINRGRYAKHVKQIRQDLAIPKEIPIIVFSAETGHGKEDVLDLLDYFWNGIQPEEEREIL.

Residues 22–195 (NLPEVALVGR…LDLLDYFWNG (174 aa)) form the EngB-type G domain. Residues 30–37 (GRSNVGKS), 57–61 (GKTQT), 75–78 (DLPG), 142–145 (TKAD), and 174–176 (FSA) each bind GTP. Mg(2+) contacts are provided by Ser37 and Thr59.

The protein belongs to the TRAFAC class TrmE-Era-EngA-EngB-Septin-like GTPase superfamily. EngB GTPase family. Mg(2+) is required as a cofactor.

Functionally, necessary for normal cell division and for the maintenance of normal septation. This Heliobacterium modesticaldum (strain ATCC 51547 / Ice1) protein is Probable GTP-binding protein EngB.